The following is a 473-amino-acid chain: Pyruvate kinase (473 aa).

Arginine 32 is a substrate binding site. K(+)-binding residues include asparagine 34, serine 36, aspartate 66, and threonine 67. An ATP-binding site is contributed by 34–37; that stretch reads NFSH. ATP-binding residues include arginine 73 and lysine 155. Glutamate 221 provides a ligand contact to Mg(2+). Substrate is bound by residues glycine 244, aspartate 245, and threonine 277. Aspartate 245 provides a ligand contact to Mg(2+).

It belongs to the pyruvate kinase family. Homotetramer. Mg(2+) serves as cofactor. Requires K(+) as cofactor.

It carries out the reaction pyruvate + ATP = phosphoenolpyruvate + ADP + H(+). The protein operates within carbohydrate degradation; glycolysis; pyruvate from D-glyceraldehyde 3-phosphate: step 5/5. This is Pyruvate kinase (pyk) from Clostridium acetobutylicum (strain ATCC 824 / DSM 792 / JCM 1419 / IAM 19013 / LMG 5710 / NBRC 13948 / NRRL B-527 / VKM B-1787 / 2291 / W).